A 311-amino-acid polypeptide reads, in one-letter code: 4-diphosphocytidyl-2-C-methyl-D-erythritol kinase (311 aa).

Residue Lys11 is part of the active site. 94 to 104 contributes to the ATP binding site; the sequence is PVAAGLAGGSA. Residue Asp136 is part of the active site.

Belongs to the GHMP kinase family. IspE subfamily.

The catalysed reaction is 4-CDP-2-C-methyl-D-erythritol + ATP = 4-CDP-2-C-methyl-D-erythritol 2-phosphate + ADP + H(+). Its pathway is isoprenoid biosynthesis; isopentenyl diphosphate biosynthesis via DXP pathway; isopentenyl diphosphate from 1-deoxy-D-xylulose 5-phosphate: step 3/6. Its function is as follows. Catalyzes the phosphorylation of the position 2 hydroxy group of 4-diphosphocytidyl-2C-methyl-D-erythritol. This chain is 4-diphosphocytidyl-2-C-methyl-D-erythritol kinase, found in Synechococcus sp. (strain JA-2-3B'a(2-13)) (Cyanobacteria bacterium Yellowstone B-Prime).